The following is a 333-amino-acid chain: Probable endo-beta-1,4-glucanase B (333 aa).

A signal peptide spans 1–17 (MKFRNLFFAAVAGSAVA). N-linked (GlcNAc...) asparagine glycosylation is found at Asn37 and Asn100. Glu160 serves as the catalytic Proton donor. Glu267 serves as the catalytic Nucleophile.

This sequence belongs to the glycosyl hydrolase 5 (cellulase A) family.

It localises to the secreted. The catalysed reaction is Endohydrolysis of (1-&gt;4)-beta-D-glucosidic linkages in cellulose, lichenin and cereal beta-D-glucans.. In terms of biological role, has endoglucanase activity on substrates containing beta-1,4 glycosidic bonds, like in carboxymethylcellulose (CMC), hydroxyethylcellulose (HEC) and beta-glucan. Involved in the degradation of complex natural cellulosic substrates. In Aspergillus oryzae (strain ATCC 42149 / RIB 40) (Yellow koji mold), this protein is Probable endo-beta-1,4-glucanase B (eglB).